A 399-amino-acid polypeptide reads, in one-letter code: tRNA-specific 2-thiouridylase MnmA (399 aa).

ATP contacts are provided by residues 7 to 14 (AMSGGVDS) and methionine 33. Cysteine 128 serves as the catalytic Nucleophile. A disulfide bridge connects residues cysteine 128 and cysteine 224. Glycine 152 is a binding site for ATP. Residues 174-176 (KDQ) are interaction with tRNA. The active-site Cysteine persulfide intermediate is cysteine 224. The tract at residues 333 to 334 (RY) is interaction with tRNA.

Belongs to the MnmA/TRMU family.

The protein resides in the cytoplasm. The enzyme catalyses S-sulfanyl-L-cysteinyl-[protein] + uridine(34) in tRNA + AH2 + ATP = 2-thiouridine(34) in tRNA + L-cysteinyl-[protein] + A + AMP + diphosphate + H(+). Functionally, catalyzes the 2-thiolation of uridine at the wobble position (U34) of tRNA, leading to the formation of s(2)U34. This is tRNA-specific 2-thiouridylase MnmA from Rhodopirellula baltica (strain DSM 10527 / NCIMB 13988 / SH1).